The chain runs to 627 residues: Carene synthase, chloroplastic (627 aa).

Residues Met1–Val36 constitute a chloroplast transit peptide. Mg(2+) is bound by residues Asp378, Asp382, and Asp530. A DDXXD motif motif is present at residues Asp378 to Asp382.

The protein belongs to the terpene synthase family. Tpsd subfamily. Mg(2+) serves as cofactor. It depends on Mn(2+) as a cofactor.

It localises to the plastid. It is found in the chloroplast. It carries out the reaction (2E)-geranyl diphosphate = (+)-car-3-ene + diphosphate. It functions in the pathway terpene metabolism; oleoresin biosynthesis. Its function is as follows. Terpene synthase (TPS) involved in defensive oleoresin formation in conifers in response to insect attack or other injury. This is Carene synthase, chloroplastic (3CAR) from Picea glauca (White spruce).